We begin with the raw amino-acid sequence, 237 residues long: MVGENTDRSALLEKLGVDIDPELLELALTHRSYAYENGGIPNNERLEFLGDSILGQAVTVKLFRENPGLDEGELAKRRASLVSSVALAEVARGIGLGEYLLLGRGENQSGGREKASILADTVEAVIGAVYLDAGGDEATALVLRLIGPLLADPDRFGAAMDPKTSLQEAAAHHGAGQPVYTVINTGPDHSKTFHATVDVGGLVTASGEGTSKKQAEMAAALSAWTALTNHRARTPRG.

An RNase III domain is found at 8–134 (RSALLEKLGV…VIGAVYLDAG (127 aa)). Glutamate 47 provides a ligand contact to Mg(2+). The active site involves aspartate 51. Residues aspartate 120 and glutamate 123 each contribute to the Mg(2+) site. Glutamate 123 is an active-site residue. The DRBM domain maps to 161–229 (DPKTSLQEAA…ALSAWTALTN (69 aa)).

It belongs to the ribonuclease III family. In terms of assembly, homodimer. It depends on Mg(2+) as a cofactor.

It is found in the cytoplasm. It catalyses the reaction Endonucleolytic cleavage to 5'-phosphomonoester.. Digests double-stranded RNA. Involved in the processing of primary rRNA transcript to yield the immediate precursors to the large and small rRNAs (23S and 16S). Processes some mRNAs, and tRNAs when they are encoded in the rRNA operon. Processes pre-crRNA and tracrRNA of type II CRISPR loci if present in the organism. The protein is Ribonuclease 3 of Leifsonia xyli subsp. xyli (strain CTCB07).